The primary structure comprises 331 residues: Cytosolic Fe-S cluster assembly factor CFD1 (331 aa).

25-32 lines the ATP pocket; the sequence is GKGGVGKS. 2 residues coordinate [4Fe-4S] cluster: C211 and C214.

It belongs to the Mrp/NBP35 ATP-binding proteins family. NUBP2/CFD1 subfamily. In terms of assembly, heterotetramer of 2 NBP35 and 2 CFD1 chains. [4Fe-4S] cluster serves as cofactor.

The protein resides in the cytoplasm. Functionally, component of the cytosolic iron-sulfur (Fe/S) protein assembly (CIA) machinery. Required for maturation of extramitochondrial Fe-S proteins. The NBP35-CFD1 heterotetramer forms a Fe-S scaffold complex, mediating the de novo assembly of an Fe-S cluster and its transfer to target apoproteins. The sequence is that of Cytosolic Fe-S cluster assembly factor CFD1 from Cryptococcus neoformans var. neoformans serotype D (strain B-3501A) (Filobasidiella neoformans).